The following is a 228-amino-acid chain: Protein LIAT1 (228 aa).

The segment at M1–N108 is disordered. The span at Y12 to A24 shows a compositional bias: acidic residues. Residues K49–K71 are lysine-rich domain. The segment covering R50–G63 has biased composition (basic residues). The segment covering L90 to N108 has biased composition (basic and acidic residues). Residues P113–Y165 form an interaction with ATE1 region. Repeat 1 spans residues A169–C178.

Self-associates (via Lys-rich domain); targets LIAT1 to the nucleolus. Interacts with ATE1; it is not a substrate of ATE1, the interaction takes place in the cytoplasm and seems to increase ATE1 arginyltransferase activity. Interacts with JMJD6 and MRPS14. Post-translationally modified by JMJD6 lysyl-hydroxylase activity at its Lys-rich domain, which inhibits its self-association and nucleolar localization. As to expression, highly expressed in spleen, thymus, liver and brown adipose tissue. Moderately expressed in liver, testis and lung.

The protein localises to the nucleus. The protein resides in the nucleolus. It is found in the cytoplasm. Functionally, participates in nucleolar liquid-liquid phase separation (LLPS) through its N-terminal intrinsically disordered region (IDR). May be involved in ATE1-mediated N-terminal arginylation. This Mus musculus (Mouse) protein is Protein LIAT1.